We begin with the raw amino-acid sequence, 120 residues long: MLFRSAFVLLIVAFASACLVQHVQAKQIPVRRSLSTDASMSSAAGKLNRRWWFGFTGSLGKEPDNGQVQIKIIPDALIIKNPPANKDDLNKLIENLKRKHPRFKTVVMPTDPNGDVVIWE.

Positions 1–25 (MLFRSAFVLLIVAFASACLVQHVQA) are cleaved as a signal peptide. Residues 46–59 (KLNRRWWFGFTGSL) are PID14 protease inhibitor domain.

Interacts with host cysteine proteases CP1A, CP1B, XCP2 and CP2. Cleaved by host target papain-like cysteine proteases (PLCPs) to release the embedded inhibitor peptide PID14.

The protein localises to the secreted. In terms of biological role, secreted effector required for virulence. Functions as an inhibitor of a set of apoplastic maize papain-like cysteine proteases (PLCPs) including CP1A, CP1B, XCP2 and CP2, whose activity is directly linked with salicylic-acid-associated plant defenses. Acts as a substrate mimicking molecule for apoplastic PLCPs and its processing releases the embedded inhibitor peptide PID14, which in turn blocks PLCPs to modulate host immunity. This chain is Secreted effector PIT2, found in Mycosarcoma maydis (Corn smut fungus).